The primary structure comprises 583 residues: Proline--tRNA ligase (583 aa).

This sequence belongs to the class-II aminoacyl-tRNA synthetase family. ProS type 1 subfamily. As to quaternary structure, homodimer.

It is found in the cytoplasm. It catalyses the reaction tRNA(Pro) + L-proline + ATP = L-prolyl-tRNA(Pro) + AMP + diphosphate. Its function is as follows. Catalyzes the attachment of proline to tRNA(Pro) in a two-step reaction: proline is first activated by ATP to form Pro-AMP and then transferred to the acceptor end of tRNA(Pro). As ProRS can inadvertently accommodate and process non-cognate amino acids such as alanine and cysteine, to avoid such errors it has two additional distinct editing activities against alanine. One activity is designated as 'pretransfer' editing and involves the tRNA(Pro)-independent hydrolysis of activated Ala-AMP. The other activity is designated 'posttransfer' editing and involves deacylation of mischarged Ala-tRNA(Pro). The misacylated Cys-tRNA(Pro) is not edited by ProRS. The chain is Proline--tRNA ligase from Acidothermus cellulolyticus (strain ATCC 43068 / DSM 8971 / 11B).